A 998-amino-acid chain; its full sequence is GGFMSQDHTGYENDEGYESDIDEKTQEQAAPAQPTLDTADDGFSFTPASSTQSTPAISTLSGTISTDDQISDPITKAVREIIIQQQKDEIAEQILKDLAALVDRDLAEQKRKEIEEEKEKDKKLSVFFGNPANREFIDNALEKPELKKKLESIEITGYKNILLTYSAANGYHGGFKPVQWENQISASDLRATVVKNDAGDELCTLNETTVKTKPFTVAKKDGTQVQINSYRAIDFPIKLDKADGSMHLSMVALKADGTKPSKDRAVYFTAHYEEGPNGKPQLKEISSPQPLKFAGDGPDAVAYIEHGGEIYTLAVTRGKYKEMMKEVELHQGQSVDLSQIIAEDLTKVQGRSQETLQPIITPNQELKSSIETPTTTQVPPITPASQPVHTETSQMPQSQQVNPNLFNAATALSCSMQDLLNYVNAGLTKEKDGNTQIDLINEAATAILNNEKEKQANFITLTKNMVNNNALTPDTKVARVNAVLETIKNNQDTPDIEKSKMLEATVAITLNSENLTPKQKQQMLEKAVDVDLSFKDDTSRAVAIDGITGAVIKSNLSTKDKGTMLIAVGDKVNASELSNAEKQQLLGSVLKKGVETKILSPEQQQLMQQNLDKITAEQTKNDNITEVQGILANPAFNTIAKTAAIQKVTTKVLDSPITAEIKGETLESITKIVAESPLNVQDKTDIVKGMGEAIASHRTMAPTKKIAAIESVETGVAKSITDLEDKKLMTKGLVDGIYEDKANPEITSEMMKAVSKGVDNSTAIPEDKQALKDAASEAALDRATQNFTEGLKGQNLDEPKPRDDIYNKAQDIAYALKNVVTTVLDANPEKREVSEEEVMNKTSSILNDISKIAIEKVNNLRAMLSPDSNLKTLEEKKAEATKKVDELVKEFGTKSSTEEQQSFIQANLIDDKTLSKEVRLQTIDKLLQEQAQKRAEAIKNPNVKTEDLRVVSGQSALKPISNDEPDIEKTKMVVGRDRVNIKDNIKIMGALMNARDSI.

The disordered stretch occupies residues 1-69 (GGFMSQDHTG…LSGTISTDDQ (69 aa)). Positions 12–21 (ENDEGYESDI) are enriched in acidic residues. The span at 46 to 68 (TPASSTQSTPAISTLSGTISTDD) shows a compositional bias: polar residues.

It localises to the cytoplasm. In Rickettsia akari, this protein is Antigenic heat-stable 120 kDa protein (sca4).